Reading from the N-terminus, the 318-residue chain is Probable carboxylesterase 1 (318 aa).

Met-1 carries the post-translational modification N-acetylmethionine. The Involved in the stabilization of the negatively charged intermediate by the formation of the oxyanion hole motif lies at 79–81 (HGG). Catalysis depends on residues Ser-163, Asp-258, and His-290.

This sequence belongs to the 'GDXG' lipolytic enzyme family. In terms of tissue distribution, expressed in roots, stems, flowers and siliques.

The catalysed reaction is a carboxylic ester + H2O = an alcohol + a carboxylate + H(+). Carboxylesterase acting on esters with varying acyl chain length. The polypeptide is Probable carboxylesterase 1 (CXE1) (Arabidopsis thaliana (Mouse-ear cress)).